The following is a 103-amino-acid chain: Histone H4 (103 aa).

A compositionally biased stretch (gly residues) spans methionine 1–glycine 14. The disordered stretch occupies residues methionine 1–arginine 20. Residues lysine 17–lysine 21 mediate DNA binding.

Belongs to the histone H4 family. In terms of assembly, the nucleosome is a histone octamer containing two molecules each of H2A, H2B, H3 and H4 assembled in one H3-H4 heterotetramer and two H2A-H2B heterodimers. The octamer wraps approximately 147 bp of DNA.

Its subcellular location is the nucleus. The protein resides in the chromosome. Core component of nucleosome. Nucleosomes wrap and compact DNA into chromatin, limiting DNA accessibility to the cellular machineries which require DNA as a template. Histones thereby play a central role in transcription regulation, DNA repair, DNA replication and chromosomal stability. DNA accessibility is regulated via a complex set of post-translational modifications of histones, also called histone code, and nucleosome remodeling. In Eimeria tenella (Coccidian parasite), this protein is Histone H4.